Here is a 223-residue protein sequence, read N- to C-terminus: 7-cyano-7-deazaguanine synthase (223 aa).

15 to 25 (FSGGQDSTTCL) serves as a coordination point for ATP. Residues Cys-191, Cys-200, Cys-203, and Cys-206 each contribute to the Zn(2+) site.

The protein belongs to the QueC family. In terms of assembly, homodimer. It depends on Zn(2+) as a cofactor.

It catalyses the reaction 7-carboxy-7-deazaguanine + NH4(+) + ATP = 7-cyano-7-deazaguanine + ADP + phosphate + H2O + H(+). It participates in purine metabolism; 7-cyano-7-deazaguanine biosynthesis. Catalyzes the ATP-dependent conversion of 7-carboxy-7-deazaguanine (CDG) to 7-cyano-7-deazaguanine (preQ(0)). The sequence is that of 7-cyano-7-deazaguanine synthase from Staphylococcus saprophyticus subsp. saprophyticus (strain ATCC 15305 / DSM 20229 / NCIMB 8711 / NCTC 7292 / S-41).